A 697-amino-acid polypeptide reads, in one-letter code: MARQVPLERCRNIGIMAHIDAGKTTTTERVLFYTGRTHRIGEVHEGTATMDWMAQEQERGITITSAATTCTWRDERINIIDTPGHVDFTAEVERSLRVLDGAVAVFDAVHGVEPQSETVWRQADKYSVPRICFINKIDKMGADFEHAIDTIRKRLNAKPVAIQYPIGLEDKFKGVIDLFKMKALVWHDEAMGSQYDVEEIPAELLKKAQAFHNLMVETIAECDDELMAKYIEGEEMTAAELQAGLRRATIAMKVFPVTVGTAFKNKGVQTLLDAVVDYLPSPLDIPPVTGKNPDTGLEEQRSADDKQPFAALAFKIMTDPFVGQLTFIRVYSGQLKTGDSVYNSSKGRTERIGRLLKMHANKREEIGEIMAGDICAVVGLKTITTGDTISDEKHPLVLESIEFPTPVISVAVEPKTKSDQEKMGVALNKLAQEDPTFRVSTDPDSGQTIIAGMGELHLEILVDRMMREFHVQANVGKPQVAYRETIRKEAQAEGKYIRQTGGSGQYGHCKIRVGPNEPGKGYEFINDIVGGTIPKEFIKPIDQGIKEALEGGVLAGYEMVDVKVTLYDGSYHDVDSNEMAFKIAGSMAFKEAARKASPVLLEPVMSVEVVVPEEYMGVIIGDLNSRRGRIEGLEHRAGSQVVKAMVPLAEMFGYVNSMRSNTQGRATFSMHFAHYEEAPRSVAEEIVAKVQGKPAAR.

Residues 8 to 283 (ERCRNIGIMA…AVVDYLPSPL (276 aa)) enclose the tr-type G domain. GTP-binding positions include 17–24 (AHIDAGKT), 81–85 (DTPGH), and 135–138 (NKID).

This sequence belongs to the TRAFAC class translation factor GTPase superfamily. Classic translation factor GTPase family. EF-G/EF-2 subfamily.

The protein resides in the cytoplasm. Functionally, catalyzes the GTP-dependent ribosomal translocation step during translation elongation. During this step, the ribosome changes from the pre-translocational (PRE) to the post-translocational (POST) state as the newly formed A-site-bound peptidyl-tRNA and P-site-bound deacylated tRNA move to the P and E sites, respectively. Catalyzes the coordinated movement of the two tRNA molecules, the mRNA and conformational changes in the ribosome. The sequence is that of Elongation factor G from Koribacter versatilis (strain Ellin345).